A 205-amino-acid chain; its full sequence is MLEVSNLTAIRDERVLFENLQFEIKPGELVQIEGRNGTGKTTLLRIVTGLGDRDEGSIKWKGEAIEKSRDQFHQDLLFLGHQTGVKRELTAFENLRFYQSIHNSDSSSERIFHALTQVGLAGREDVPVAQLSAGQQRRVALARLWLSHQILWILDEPLTAIDKQGVKVLESLFSNHVDNGGIVILTTHQDMFADSPKLRKIKLGD.

The region spanning 2–204 is the ABC transporter domain; sequence LEVSNLTAIR…SPKLRKIKLG (203 aa). An ATP-binding site is contributed by 34 to 41; that stretch reads GRNGTGKT.

Belongs to the ABC transporter superfamily. CcmA exporter (TC 3.A.1.107) family. As to quaternary structure, the complex is composed of two ATP-binding proteins (CcmA) and two transmembrane proteins (CcmB).

It is found in the cell inner membrane. It carries out the reaction heme b(in) + ATP + H2O = heme b(out) + ADP + phosphate + H(+). Part of the ABC transporter complex CcmAB involved in the biogenesis of c-type cytochromes; once thought to export heme, this seems not to be the case, but its exact role is uncertain. Responsible for energy coupling to the transport system. The sequence is that of Cytochrome c biogenesis ATP-binding export protein CcmA from Vibrio vulnificus (strain YJ016).